Consider the following 173-residue polypeptide: U4/U6.U5 small nuclear ribonucleoprotein component snu23 (173 aa).

A Matrin-type zinc finger spans residues 55–85; sequence WYCEACNETYKDSLSWLDHLNSTQHLRKTRT. Residues 119–149 are a coiled coil; the sequence is SLKERVERYHQELEAKKLRRKQKKVNKEKNS.

As to quaternary structure, component of the 25S U4/U6.U5 tri-snRNP particle, a subcomplex of the spliceosome.

It is found in the cytoplasm. Its subcellular location is the cytoskeleton. The protein resides in the microtubule organizing center. It localises to the spindle pole body. The protein localises to the nucleus. This chain is U4/U6.U5 small nuclear ribonucleoprotein component snu23 (snu23), found in Schizosaccharomyces pombe (strain 972 / ATCC 24843) (Fission yeast).